Consider the following 108-residue polypeptide: DNA-binding protein HBbu (108 aa).

The protein belongs to the bacterial histone-like protein family.

Its function is as follows. Histone-like DNA-binding protein which is capable of wrapping DNA to stabilize it, and thus to prevent its denaturation under extreme environmental conditions. This Borrelia turicatae protein is DNA-binding protein HBbu (hbb).